The sequence spans 127 residues: Protein ApaG (127 aa).

The 125-residue stretch at 3–127 (KTSIPDFQIT…FYLIAPLALH (125 aa)) folds into the ApaG domain.

This chain is Protein ApaG, found in Bdellovibrio bacteriovorus (strain ATCC 15356 / DSM 50701 / NCIMB 9529 / HD100).